We begin with the raw amino-acid sequence, 308 residues long: Transcription initiation factor TFIID subunit 8 (308 aa).

Residues 1–29 (MADTAAGPGGSGTRPGSKQSTNPADNYHL) are disordered. The residue at position 2 (Ala-2) is an N-acetylalanine. Over residues 14–24 (RPGSKQSTNPA) the composition is skewed to polar residues. A Histone-fold domain is found at 35-102 (LQVVVSSLLT…VTLVEMGFNV (68 aa)). The residue at position 128 (Thr-128) is a Phosphothreonine. A compositionally biased stretch (acidic residues) spans 235–248 (MEETDSSEQEEQTD). A disordered region spans residues 235–308 (MEETDSSEQE…PKIRRKKSLS (74 aa)). Positions 268–281 (ASVLQQSSSLSGSR) are enriched in low complexity. At Ser-269 the chain carries Phosphoserine. Positions 292 to 305 (YLRPVKKPKIRRKK) match the Nuclear localization signal motif. Over residues 295-308 (PVKKPKIRRKKSLS) the composition is skewed to basic residues.

The protein belongs to the TAF8 family. Component of the TFIID basal transcription factor complex, composed of TATA-box-binding protein TBP, and a number of TBP-associated factors (TAFs), including TAF1, TAF2, TAF3, TAF4, TAF5, TAF6, TAF7, TAF8, TAF9, TAF10, TAF11, TAF12 and TAF13. Interacts with TBP, TAF1, TAF6, TAF10, TAF11 and TAF13. Component also of a small TAF complex (SMAT) containing TAF8, TAF10 and SUPT7L. Forms a heterodimer with TAF10. Interaction with TAF10 is mediated mainly via its histone fold domain while interaction with SUPT7L is via its C-terminal region. As to expression, low level of expression throughout the brain with slightly higher expression in the hippocampus.

The protein resides in the nucleus. The protein localises to the cytoplasm. The TFIID basal transcription factor complex plays a major role in the initiation of RNA polymerase II (Pol II)-dependent transcription. TFIID recognizes and binds promoters with or without a TATA box via its subunit TBP, a TATA-box-binding protein, and promotes assembly of the pre-initiation complex (PIC). The TFIID complex consists of TBP and TBP-associated factors (TAFs), including TAF1, TAF2, TAF3, TAF4, TAF5, TAF6, TAF7, TAF8, TAF9, TAF10, TAF11, TAF12 and TAF13. The TFIID complex structure can be divided into 3 modules TFIID-A, TFIID-B, and TFIID-C. TAF8 is involved in forming the TFIID-B module, together with TAF5. Mediates both basal and activator-dependent transcription. Plays a role in the differentiation of preadipocyte fibroblasts to adipocytes, however, does not seem to play a role in differentiation of myoblasts. Required for the integration of TAF10 in the TAF complex. May be important for survival of cells of the inner cell mass which constitute the pluripotent cell population of the early embryo. This chain is Transcription initiation factor TFIID subunit 8 (Taf8), found in Mus musculus (Mouse).